Reading from the N-terminus, the 419-residue chain is S-adenosylmethionine synthase (419 aa).

Position 14 (His14) interacts with ATP. Asp16 serves as a coordination point for Mg(2+). Glu42 contributes to the K(+) binding site. Residues Glu55 and Gln98 each contribute to the L-methionine site. The interval 98–108 (QSQDIYQGVDR) is flexible loop. ATP is bound by residues 164 to 166 (DSK), 242 to 243 (KF), Asp251, 257 to 258 (RK), Ala274, and Lys278. Residue Asp251 coordinates L-methionine. Lys282 contacts L-methionine.

The protein belongs to the AdoMet synthase family. In terms of assembly, homotetramer; dimer of dimers. It depends on Mg(2+) as a cofactor. Requires K(+) as cofactor.

The protein localises to the cytoplasm. It catalyses the reaction L-methionine + ATP + H2O = S-adenosyl-L-methionine + phosphate + diphosphate. It functions in the pathway amino-acid biosynthesis; S-adenosyl-L-methionine biosynthesis; S-adenosyl-L-methionine from L-methionine: step 1/1. Its function is as follows. Catalyzes the formation of S-adenosylmethionine (AdoMet) from methionine and ATP. The overall synthetic reaction is composed of two sequential steps, AdoMet formation and the subsequent tripolyphosphate hydrolysis which occurs prior to release of AdoMet from the enzyme. This is S-adenosylmethionine synthase from Christiangramia forsetii (strain DSM 17595 / CGMCC 1.15422 / KT0803) (Gramella forsetii).